The chain runs to 191 residues: NADH-quinone oxidoreductase subunit B 2 (191 aa).

[4Fe-4S] cluster-binding residues include Cys-69, Cys-70, Cys-134, and Cys-164.

It belongs to the complex I 20 kDa subunit family. In terms of assembly, NDH-1 is composed of 14 different subunits. Subunits NuoB, C, D, E, F, and G constitute the peripheral sector of the complex. [4Fe-4S] cluster serves as cofactor.

It is found in the cell inner membrane. It carries out the reaction a quinone + NADH + 5 H(+)(in) = a quinol + NAD(+) + 4 H(+)(out). In terms of biological role, NDH-1 shuttles electrons from NADH, via FMN and iron-sulfur (Fe-S) centers, to quinones in the respiratory chain. Couples the redox reaction to proton translocation (for every two electrons transferred, four hydrogen ions are translocated across the cytoplasmic membrane), and thus conserves the redox energy in a proton gradient. This chain is NADH-quinone oxidoreductase subunit B 2, found in Gluconacetobacter diazotrophicus (strain ATCC 49037 / DSM 5601 / CCUG 37298 / CIP 103539 / LMG 7603 / PAl5).